The primary structure comprises 303 residues: Zinc transporter ZIP9 (303 aa).

The chain crosses the membrane as a helical span at residues 7–27 (ISLLSLAMLVGCYVSGIIPLA). N29 carries an N-linked (GlcNAc...) asparagine glycan. Helical transmembrane passes span 35–55 (LKLV…AVIV), 102–122 (AYIG…DQIG), 142–162 (ITTT…LGAA), 172–192 (LIVF…LVSF), and 206–226 (HLLV…LGLS). N237 carries an N-linked (GlcNAc...) asparagine glycan. 2 helical membrane-spanning segments follow: residues 240 to 260 (GVAM…HVLP) and 282 to 302 (LEVC…IGHQ).

Belongs to the ZIP transporter (TC 2.A.5) family.

Its subcellular location is the golgi apparatus. It localises to the trans-Golgi network membrane. The protein localises to the cell membrane. The protein resides in the cytoplasm. It is found in the perinuclear region. Its subcellular location is the mitochondrion. It localises to the nucleus. It carries out the reaction Zn(2+)(in) = Zn(2+)(out). Transports zinc ions across cell and organelle membranes into the cytoplasm and regulates intracellular zinc homeostasis. Participates in the zinc ions efflux out of the secretory compartments. Also functions as a membrane androgen receptor that mediates, through a G protein, the non-classical androgen signaling pathway, characterized by the activation of MAPK3/MAPK1 (Erk1/2) and transcription factors CREB1 or ATF1. Moreover, has dual functions as a membrane-bound androgen receptor and as an androgen-dependent zinc transporter both of which are mediated through an inhibitory G protein (Gi) that mediates both MAP kinase and zinc signaling leading to the androgen-dependent apoptotic process. This Xenopus tropicalis (Western clawed frog) protein is Zinc transporter ZIP9.